Consider the following 445-residue polypeptide: Phosphoglucosamine mutase (445 aa).

Serine 102 serves as the catalytic Phosphoserine intermediate. 4 residues coordinate Mg(2+): serine 102, aspartate 241, aspartate 243, and aspartate 245. Serine 102 carries the post-translational modification Phosphoserine.

It belongs to the phosphohexose mutase family. Mg(2+) is required as a cofactor. In terms of processing, activated by phosphorylation.

The catalysed reaction is alpha-D-glucosamine 1-phosphate = D-glucosamine 6-phosphate. Catalyzes the conversion of glucosamine-6-phosphate to glucosamine-1-phosphate. This chain is Phosphoglucosamine mutase, found in Salmonella dublin (strain CT_02021853).